The following is a 390-amino-acid chain: Isoaspartyl dipeptidase (390 aa).

His-68 and His-70 together coordinate Zn(2+). Substrate contacts are provided by residues 75–77, Thr-106, and Tyr-137; that span reads GGE. Lys-162 is a Zn(2+) binding site. Lys-162 carries the post-translational modification N6-carboxylysine. Arg-169 is a binding site for substrate. Positions 201 and 230 each coordinate Zn(2+). Residue Arg-233 participates in substrate binding. Position 285 (Asp-285) interacts with Zn(2+). Asp-285 acts as the Proton acceptor in catalysis. Ser-289 provides a ligand contact to substrate.

Belongs to the peptidase M38 family. It depends on Zn(2+) as a cofactor. The cofactor is Co(2+). Carboxylation allows a single lysine to coordinate two zinc ions.

It is found in the cytoplasm. P-hydroxymercuribenzoate causes a slight inhibition (8 to 17 %). Iodoacetamide, o-iodosobenzoate and ammonium persulfate do not inhibit the enzyme activity. Functionally, catalyzes the hydrolytic cleavage of a subset of L-isoaspartyl (L-beta-aspartyl) dipeptides. Used to degrade proteins damaged by L-isoaspartyl residues formation. The best substrate for the enzyme reported thus far is iso-Asp-Leu. The chain is Isoaspartyl dipeptidase (iadA) from Escherichia coli (strain K12).